The chain runs to 676 residues: Kojibiose hydrolase (676 aa).

Residues 1 to 20 (MNKGIIQLLALSLFCISVKA) form the signal peptide. Residue Glu469 is the Proton donor of the active site. Glu613 acts as the Proton acceptor in catalysis.

Belongs to the glycosyl hydrolase 65 family.

The enzyme catalyses kojibiose + H2O = beta-D-glucose + D-glucose. Glycosidase that specifically hydrolyzes kojibiose to beta-glucose and glucose. Besides its activity on kojibiose, is also able to act on alpha-1,2-oligoglucans with a higher degree of polymerization. Shows weak activity on nigerose, but is not capable of breaking down trehalose, maltose, isomaltose, sucrose, isomaltulose, turanose or melezitose. The sequence is that of Kojibiose hydrolase from Mucilaginibacter mallensis.